The following is a 447-amino-acid chain: UDP-N-acetyl-alpha-D-muramoyl-L-alanyl-L-glutamate epimerase (447 aa).

It belongs to the MurL family.

It carries out the reaction UDP-N-acetyl-alpha-D-muramoyl-L-alanyl-L-glutamate + ATP + H2O = UDP-N-acetyl-alpha-D-muramoyl-L-alanyl-D-glutamate + AMP + diphosphate + H(+). Its pathway is cell wall biogenesis; peptidoglycan biosynthesis. Cell wall formation. Catalyzes epimerization of the terminal L-glutamate in UDP-N-acetyl-alpha-D-muramoyl-L-alanyl-L-glutamate. The chain is UDP-N-acetyl-alpha-D-muramoyl-L-alanyl-L-glutamate epimerase from Micromonospora sp. (strain ATCC 39149 / NRRL 15099 / SCC 1413).